A 238-amino-acid chain; its full sequence is Dephospho-CoA kinase (238 aa).

A DPCK domain is found at 3–233 (IIGLTGGVGT…QRPFASPPRA (231 aa)). Residue 11-16 (GTGKST) participates in ATP binding. Disordered stretches follow at residues 110–129 (HGVPLEEEPASQKRSGVGFS) and 219–238 (LASAGQRPFASPPRAGYSDG).

It belongs to the CoaE family.

It is found in the cytoplasm. It catalyses the reaction 3'-dephospho-CoA + ATP = ADP + CoA + H(+). The protein operates within cofactor biosynthesis; coenzyme A biosynthesis; CoA from (R)-pantothenate: step 5/5. Its function is as follows. Catalyzes the phosphorylation of the 3'-hydroxyl group of dephosphocoenzyme A to form coenzyme A. This chain is Dephospho-CoA kinase, found in Synechococcus sp. (strain JA-2-3B'a(2-13)) (Cyanobacteria bacterium Yellowstone B-Prime).